A 317-amino-acid polypeptide reads, in one-letter code: Small ribosomal subunit protein RACK1 (317 aa).

WD repeat units lie at residues 15–55 (GHNG…DNQY), 64–103 (GHSH…TTQR), 106–146 (GHKG…ATLT), 148–188 (HNDW…VNAD), 191–230 (GHTG…TLYT), 232–272 (EAKA…DELK), and 281–317 (AKDP…TPSA).

It belongs to the WD repeat G protein beta family. Ribosomal protein RACK1 subfamily. In terms of assembly, component of the small ribosomal subunit. Mature ribosomes consist of a small (40S) and a large (60S) subunit. The 40S subunit contains about 32 different proteins and 1 molecule of RNA (18S). The 60S subunit contains 45 different proteins and 3 molecules of RNA (25S, 5.8S and 5S).

The protein resides in the cytoplasm. Functionally, component of the ribosome, a large ribonucleoprotein complex responsible for the synthesis of proteins in the cell. The small ribosomal subunit (SSU) binds messenger RNAs (mRNAs) and translates the encoded message by selecting cognate aminoacyl-transfer RNA (tRNA) molecules. The large subunit (LSU) contains the ribosomal catalytic site termed the peptidyl transferase center (PTC), which catalyzes the formation of peptide bonds, thereby polymerizing the amino acids delivered by tRNAs into a polypeptide chain. The nascent polypeptides leave the ribosome through a tunnel in the LSU and interact with protein factors that function in enzymatic processing, targeting, and the membrane insertion of nascent chains at the exit of the ribosomal tunnel. Located at the head of the 40S ribosomal subunit in the vicinity of the mRNA exit channel, it serves as a scaffold protein that can recruit other proteins to the ribosome. Involved in the negative regulation of translation of a specific subset of proteins. Plays a role in morphogenesis and pathogenesis. In Candida albicans (strain SC5314 / ATCC MYA-2876) (Yeast), this protein is Small ribosomal subunit protein RACK1.